A 202-amino-acid polypeptide reads, in one-letter code: Ribonuclease HII (202 aa).

One can recognise an RNase H type-2 domain in the interval 18 to 202; the sequence is GQYAGVDEVG…KSFRPVREAM (185 aa). A divalent metal cation contacts are provided by Asp-24, Glu-25, and Asp-116.

Belongs to the RNase HII family. It depends on Mn(2+) as a cofactor. Mg(2+) is required as a cofactor.

It is found in the cytoplasm. The enzyme catalyses Endonucleolytic cleavage to 5'-phosphomonoester.. Endonuclease that specifically degrades the RNA of RNA-DNA hybrids. The protein is Ribonuclease HII of Shewanella piezotolerans (strain WP3 / JCM 13877).